The sequence spans 120 residues: Ribonuclease P protein component (120 aa).

This sequence belongs to the RnpA family. In terms of assembly, consists of a catalytic RNA component (M1 or rnpB) and a protein subunit.

It carries out the reaction Endonucleolytic cleavage of RNA, removing 5'-extranucleotides from tRNA precursor.. RNaseP catalyzes the removal of the 5'-leader sequence from pre-tRNA to produce the mature 5'-terminus. It can also cleave other RNA substrates such as 4.5S RNA. The protein component plays an auxiliary but essential role in vivo by binding to the 5'-leader sequence and broadening the substrate specificity of the ribozyme. The polypeptide is Ribonuclease P protein component (Desulfotalea psychrophila (strain LSv54 / DSM 12343)).